The following is a 170-amino-acid chain: Ribulose bisphosphate carboxylase small subunit, chloroplastic (170 aa).

2 consecutive transit peptides (chloroplast) follow at residues 1–46 and 1–47; these read MAPT…GRIR and MAPT…RIRC.

This sequence belongs to the RuBisCO small chain family. Heterohexadecamer of 8 large and 8 small subunits.

It localises to the plastid. The protein resides in the chloroplast. Its function is as follows. RuBisCO catalyzes two reactions: the carboxylation of D-ribulose 1,5-bisphosphate, the primary event in carbon dioxide fixation, as well as the oxidative fragmentation of the pentose substrate. Both reactions occur simultaneously and in competition at the same active site. Although the small subunit is not catalytic it is essential for maximal activity. This chain is Ribulose bisphosphate carboxylase small subunit, chloroplastic, found in Zea mays (Maize).